The sequence spans 103 residues: Large ribosomal subunit protein bL21 (103 aa).

This sequence belongs to the bacterial ribosomal protein bL21 family. As to quaternary structure, part of the 50S ribosomal subunit. Contacts protein L20.

Functionally, this protein binds to 23S rRNA in the presence of protein L20. This Nocardia farcinica (strain IFM 10152) protein is Large ribosomal subunit protein bL21.